The following is a 351-amino-acid chain: Heat-inducible transcription repressor HrcA (351 aa).

This sequence belongs to the HrcA family.

Its function is as follows. Negative regulator of class I heat shock genes (grpE-dnaK-dnaJ and groELS operons). Prevents heat-shock induction of these operons. The sequence is that of Heat-inducible transcription repressor HrcA from Acetivibrio thermocellus (strain ATCC 27405 / DSM 1237 / JCM 9322 / NBRC 103400 / NCIMB 10682 / NRRL B-4536 / VPI 7372) (Clostridium thermocellum).